Consider the following 301-residue polypeptide: Thiosulfate sulfurtransferase (301 aa).

Rhodanese domains are found at residues 31-138 (GSPG…DTSY) and 171-289 (QSGG…MPIE). Cysteine 248 (cysteine persulfide intermediate) is an active-site residue. Arginine 253 provides a ligand contact to substrate.

It catalyses the reaction thiosulfate + hydrogen cyanide = thiocyanate + sulfite + 2 H(+). The sequence is that of Thiosulfate sulfurtransferase (thtR) from Corynebacterium glutamicum (strain ATCC 13032 / DSM 20300 / JCM 1318 / BCRC 11384 / CCUG 27702 / LMG 3730 / NBRC 12168 / NCIMB 10025 / NRRL B-2784 / 534).